We begin with the raw amino-acid sequence, 355 residues long: S-adenosylmethionine:tRNA ribosyltransferase-isomerase (355 aa).

Belongs to the QueA family. As to quaternary structure, monomer.

The protein resides in the cytoplasm. It catalyses the reaction 7-aminomethyl-7-carbaguanosine(34) in tRNA + S-adenosyl-L-methionine = epoxyqueuosine(34) in tRNA + adenine + L-methionine + 2 H(+). It participates in tRNA modification; tRNA-queuosine biosynthesis. In terms of biological role, transfers and isomerizes the ribose moiety from AdoMet to the 7-aminomethyl group of 7-deazaguanine (preQ1-tRNA) to give epoxyqueuosine (oQ-tRNA). The polypeptide is S-adenosylmethionine:tRNA ribosyltransferase-isomerase (Aeromonas hydrophila subsp. hydrophila (strain ATCC 7966 / DSM 30187 / BCRC 13018 / CCUG 14551 / JCM 1027 / KCTC 2358 / NCIMB 9240 / NCTC 8049)).